Consider the following 515-residue polypeptide: Adenine DNA glycosylase (515 aa).

The span at 1-24 shows a compositional bias: basic residues; it reads MKKLQASVRSHKKQPANHKRRRTR. The disordered stretch occupies residues 1-38; sequence MKKLQASVRSHKKQPANHKRRRTRALSSSQAKPSSLDG. Residue Glu105 is the Proton donor/acceptor of the active site. [4Fe-4S] cluster-binding residues include Cys261, Cys268, Cys271, and Cys277. The region spanning 335–466 is the Nudix hydrolase domain; the sequence is PREEYSATCV…AMKKVFRMYE (132 aa). Residues 376–398 carry the Nudix box motif; that stretch reads VTLEPSEQHQHKALLQELQRWCG. The tract at residues 468 to 494 is disordered; the sequence is HRQGTRKGSKRSQVCPPSSRKKPSLGQ.

The protein belongs to the Nth/MutY family. It depends on [4Fe-4S] cluster as a cofactor. As to expression, expressed in heart, lung, liver, intestine, brain and thymus.

Its subcellular location is the nucleus. The protein localises to the mitochondrion. The catalysed reaction is Hydrolyzes free adenine bases from 7,8-dihydro-8-oxoguanine:adenine mismatched double-stranded DNA, leaving an apurinic site.. Its function is as follows. Involved in oxidative DNA damage repair. Initiates repair of A*oxoG to C*G by removing the inappropriately paired adenine base from the DNA backbone. Possesses both adenine and 2-OH-A DNA glycosylase activities. This chain is Adenine DNA glycosylase (Mutyh), found in Mus musculus (Mouse).